Here is a 478-residue protein sequence, read N- to C-terminus: Cysteine protease ATG4B (478 aa).

Polar residues predominate over residues 1–15; that stretch reads MTSLPDRGVSSSSSD. A disordered region spans residues 1–31; sequence MTSLPDRGVSSSSSDPLCEGNIAPCSSSSEQ. Cys164 serves as the catalytic Nucleophile. Active-site residues include Asp361 and His363.

The protein belongs to the peptidase C54 family. Interacts with ATG8.

The protein localises to the cytoplasm. The enzyme catalyses [protein]-C-terminal L-amino acid-glycyl-phosphatidylethanolamide + H2O = [protein]-C-terminal L-amino acid-glycine + a 1,2-diacyl-sn-glycero-3-phosphoethanolamine. Functionally, cysteine protease that plays a key role in autophagy by mediating both proteolytic activation and delipidation of ATG8 family proteins. The protease activity is required for proteolytic activation of ATG8 family proteins: cleaves the C-terminal amino acid of ATG8 proteins to reveal a C-terminal glycine. Exposure of the glycine at the C-terminus is essential for ATG8 proteins conjugation to phosphatidylethanolamine (PE) and insertion to membranes, which is necessary for autophagy. In addition to the protease activity, also mediates delipidation of PE-conjugated ATG8 proteins. The chain is Cysteine protease ATG4B (ATG4B) from Oryza sativa subsp. japonica (Rice).